The chain runs to 252 residues: MSRKPIIAGNWKMNKNPQEARAFVEAVASKLPSTDLVDVAVAAPAVDLVTTIEAAKDSVLKVAAQNCYFENTGAFTGETSPKVLAEMGADYVVIGHSERRDYFHETDEDINKKAKAIFANGLTPIVCCGESLETYEAGKAVEFVGAQVSAALAGLSAEQVASLVLAYEPIWAIGTGKSATQDDAQNMCKAVRDVVAADFGQEVADKVRVQYGGSVKPENVKDYMACPDVDGALVGGASLEAGSFLALLDFLN.

Residue 10–12 (NWK) coordinates substrate. The active-site Electrophile is the His96. Glu168 functions as the Proton acceptor in the catalytic mechanism. Residues Gly174, Ser214, and 235–236 (GG) each bind substrate.

Belongs to the triosephosphate isomerase family. As to quaternary structure, homodimer.

It is found in the cytoplasm. The enzyme catalyses D-glyceraldehyde 3-phosphate = dihydroxyacetone phosphate. It functions in the pathway carbohydrate biosynthesis; gluconeogenesis. The protein operates within carbohydrate degradation; glycolysis; D-glyceraldehyde 3-phosphate from glycerone phosphate: step 1/1. Functionally, involved in the gluconeogenesis. Catalyzes stereospecifically the conversion of dihydroxyacetone phosphate (DHAP) to D-glyceraldehyde-3-phosphate (G3P). This Streptococcus pyogenes serotype M6 (strain ATCC BAA-946 / MGAS10394) protein is Triosephosphate isomerase.